An 86-amino-acid chain; its full sequence is Cytochrome c oxidase subunit 6B1 (86 aa).

Position 2 is an N-acetylalanine (Ala-2). Residues 27–73 (TRNCWQNYLDFHRCQKAMTAKGGDISVCEWYQRVYQSLCPTSWVTDW) form the CHCH domain. Positions 30–40 (CWQNYLDFHRC) match the Cx9C motif motif. 2 disulfide bridges follow: Cys-30-Cys-65 and Cys-40-Cys-54. Positions 54–65 (CEWYQRVYQSLC) match the Cx10C motif motif.

This sequence belongs to the cytochrome c oxidase subunit 6B family. In terms of assembly, component of the cytochrome c oxidase (complex IV, CIV), a multisubunit enzyme composed of 14 subunits. The complex is composed of a catalytic core of 3 subunits MT-CO1, MT-CO2 and MT-CO3, encoded in the mitochondrial DNA, and 11 supernumerary subunits COX4I, COX5A, COX5B, COX6A, COX6B, COX6C, COX7A, COX7B, COX7C, COX8 and NDUFA4, which are encoded in the nuclear genome. The complex exists as a monomer or a dimer and forms supercomplexes (SCs) in the inner mitochondrial membrane with NADH-ubiquinone oxidoreductase (complex I, CI) and ubiquinol-cytochrome c oxidoreductase (cytochrome b-c1 complex, complex III, CIII), resulting in different assemblies (supercomplex SCI(1)III(2)IV(1) and megacomplex MCI(2)III(2)IV(2)).

The protein resides in the mitochondrion inner membrane. It participates in energy metabolism; oxidative phosphorylation. Component of the cytochrome c oxidase, the last enzyme in the mitochondrial electron transport chain which drives oxidative phosphorylation. The respiratory chain contains 3 multisubunit complexes succinate dehydrogenase (complex II, CII), ubiquinol-cytochrome c oxidoreductase (cytochrome b-c1 complex, complex III, CIII) and cytochrome c oxidase (complex IV, CIV), that cooperate to transfer electrons derived from NADH and succinate to molecular oxygen, creating an electrochemical gradient over the inner membrane that drives transmembrane transport and the ATP synthase. Cytochrome c oxidase is the component of the respiratory chain that catalyzes the reduction of oxygen to water. Electrons originating from reduced cytochrome c in the intermembrane space (IMS) are transferred via the dinuclear copper A center (CU(A)) of subunit 2 and heme A of subunit 1 to the active site in subunit 1, a binuclear center (BNC) formed by heme A3 and copper B (CU(B)). The BNC reduces molecular oxygen to 2 water molecules using 4 electrons from cytochrome c in the IMS and 4 protons from the mitochondrial matrix. In Pongo abelii (Sumatran orangutan), this protein is Cytochrome c oxidase subunit 6B1 (COX6B1).